A 67-amino-acid polypeptide reads, in one-letter code: DNA-directed RNA polymerase subunit omega (67 aa).

Belongs to the RNA polymerase subunit omega family. In terms of assembly, the RNAP catalytic core consists of 2 alpha, 1 beta, 1 beta' and 1 omega subunit. When a sigma factor is associated with the core the holoenzyme is formed, which can initiate transcription.

The catalysed reaction is RNA(n) + a ribonucleoside 5'-triphosphate = RNA(n+1) + diphosphate. Functionally, promotes RNA polymerase assembly. Latches the N- and C-terminal regions of the beta' subunit thereby facilitating its interaction with the beta and alpha subunits. This chain is DNA-directed RNA polymerase subunit omega, found in Ralstonia nicotianae (strain ATCC BAA-1114 / GMI1000) (Ralstonia solanacearum).